A 284-amino-acid polypeptide reads, in one-letter code: Trimeric intracellular cation channel type B-A (284 aa).

At 1-15 the chain is on the lumenal side; that stretch reads MESLSELSVQFSQLS. A helical membrane pass occupies residues 16 to 33; sequence MFPFFDMAHYVVSVMSAR. The Cytoplasmic segment spans residues 34-46; that stretch reads EQAGALDIAARSP. The chain crosses the membrane as a helical span at residues 47 to 68; it reads MASWFSAMLYCFGGGILSSILL. At 69 to 79 the chain is on the lumenal side; it reads AEPPIAVLSNT. A helical membrane pass occupies residues 80-99; the sequence is TNIMLASTIWYMVYYFPYDL. Over 100 to 102 the chain is Cytoplasmic; it reads FYN. The chain crosses the membrane as a helical span at residues 103-121; sequence CFFFLPIRLIIAGMKEVTR. A 1,2-diacyl-sn-glycero-3-phospho-(1D-myo-inositol-4,5-bisphosphate) contacts are provided by Lys-117 and Arg-121. At 122–137 the chain is on the lumenal side; it reads TWKILSGVTHAHSHYK. Residues 138–155 form a helical membrane-spanning segment; it reads DALLVMITIGWARGAGGG. Residues 156–177 lie on the Cytoplasmic side of the membrane; sequence LISNFEQLVRGVWKPESNEFLK. A helical membrane pass occupies residues 178–195; sequence MSYPVKVTLIGAVLFTLQ. Over 196-206 the chain is Lumenal; it reads HGHYLPISRHN. A helical transmembrane segment spans residues 207 to 224; sequence LMLIYTMFLVLIKVTMML. The Cytoplasmic segment spans residues 225–284; that stretch reads THSTASPFLPLETPLQRILFGQRQKPSEVRQSASSSGAKGKPSKKTLDKDSGEQSKKKDS. Residues 246 to 284 are disordered; that stretch reads QRQKPSEVRQSASSSGAKGKPSKKTLDKDSGEQSKKKDS. Over residues 269 to 284 the composition is skewed to basic and acidic residues; sequence KTLDKDSGEQSKKKDS.

This sequence belongs to the TMEM38 family. As to quaternary structure, homotrimer; conformation seems to be controled by binding to diacylglycerol (DAG).

It is found in the endoplasmic reticulum membrane. The catalysed reaction is K(+)(in) = K(+)(out). Channel activity is activated by increased cytosolic Ca(2+) levels and blocked by luminal high Ca(2+) levels. Functionally, intracellular monovalent cation channel required for maintenance of rapid intracellular calcium release. Acts as a potassium counter-ion channel that functions in synchronization with calcium release from intracellular stores. Activated by increased cytosolic Ca(2+) levels. In Xenopus laevis (African clawed frog), this protein is Trimeric intracellular cation channel type B-A (tmem38b-a).